The sequence spans 250 residues: MFLLLSNDDGYASAGMRALVEVMEGAVERLIVMAPESNCSGVSHALTLTRPLTVQTHGNAIYSVNGTPADCVRVAVGGYFDEVPDMVISGINCGANLGDDVLYSGTVAAAFEGRYLKFPALAISNVAHRPKHLADTAQIVLDLFSFFKKNPLTGATLLNINIPDLPRAEIRGIRVTRLGQCRQERPLEKMINPRQEECYWIGANKGGFLADEGSDFAAIEQGFVSITPLQFDVTHDDQLEAVKHWLEPMR.

Residues Asp-8, Asp-9, Ser-40, and Asn-92 each contribute to the a divalent metal cation site.

It belongs to the SurE nucleotidase family. Requires a divalent metal cation as cofactor.

It is found in the cytoplasm. The enzyme catalyses a ribonucleoside 5'-phosphate + H2O = a ribonucleoside + phosphate. Its function is as follows. Nucleotidase that shows phosphatase activity on nucleoside 5'-monophosphates. The sequence is that of 5'-nucleotidase SurE from Dichelobacter nodosus (strain VCS1703A).